The following is a 63-amino-acid chain: PMTDVLAAGDISKAVAAFAAPESFNHKIEEEELGLILKVLLAAGDKDGDGKIGVDEFVTLVSE.

EF-hand domains lie at 28 to 38 and 39 to 63; these read IEEEELGLILK and VLLA…LVSE. Ca(2+) contacts are provided by Glu-29, Glu-32, Asp-45, Asp-47, Asp-49, Lys-51, and Glu-56.

In terms of tissue distribution, detected in muscle and cutaneous mucus. In the skin, detected in cells in the basal region of the glandular epithelium of the dermal mucus glands (at protein level).

The protein localises to the cytoplasm. It is found in the secreted. Its function is as follows. In muscle, parvalbumin is thought to be involved in relaxation after contraction. It binds two calcium ions. The sequence is that of Parvalbumin alpha from Rana temporaria (European common frog).